The primary structure comprises 733 residues: Centrosomal protein of 68 kDa (733 aa).

Residues 71-80 show a composition bias toward basic and acidic residues; it reads SKEPVADRSK. Disordered stretches follow at residues 71-92, 150-207, and 222-244; these read SKEP…SASV, GLSQ…SFAN, and VVGA…DATG. The segment covering 178 to 190 has biased composition (low complexity); the sequence is SSRSISASSVGSS. Residues 231 to 241 are compositionally biased toward polar residues; it reads GSAQPLTSGSD. Serine 315 carries the phosphoserine modification. The segment at 420–442 is disordered; it reads PQLKTKEKEPPFPRQKRGRQHVS. Phosphoserine occurs at positions 453 and 459. Positions 497–571 are disordered; the sequence is HSSLQVSDSD…KPLKTQPASK (75 aa). Residues 540-569 are compositionally biased toward polar residues; it reads IQPQDSRGKSSLMSNQTLGVSSKPLKTQPA.

Interacts with CNTLN; the interaction recruits CEP68 to the centrosome. Interacts with the SCF(FBXW11) complex which contains SKP1, CUL1 and FBXW11; the interaction is probably mediated by FBXW11 and the complex also contains CDK5RAP2 and PCNT. Also interacts with F-box protein BTRC. Interacts with serine/threonine-protein kinase PLK1; the interaction leads to phosphorylation of CEP68 and its subsequent degradation. Interacts with NEK2; the interaction leads to phosphorylation of CEP68. Post-translationally, phosphorylation by PLK1 is required for binding to BTRC in prometaphase. Phosphorylated directly or indirectly by NEK2. NEK2-mediated phosphorylation promotes CEP68 dissociation from the centrosome and its degradation at the onset of mitosis. Ubiquitinated and targeted for proteasomal degradation in early mitosis by the SCF(BTRC) and/or SCF(FBXW11) E3 ubiquitin-protein ligase complexes. Degradation is complete by prometaphase and is required for removal of CDK5RAP2 from the peripheral pericentriolar material and subsequent centriole separation.

The protein resides in the cytoplasm. It localises to the cytoskeleton. It is found in the microtubule organizing center. Its subcellular location is the centrosome. Functionally, involved in maintenance of centrosome cohesion, probably as part of a linker structure which prevents centrosome splitting. Required for localization of CDK5RAP2 to the centrosome during interphase. Contributes to CROCC/rootletin filament formation. This Mus musculus (Mouse) protein is Centrosomal protein of 68 kDa (Cep68).